A 511-amino-acid chain; its full sequence is NADH-ubiquinone oxidoreductase chain 4 (511 aa).

Helical transmembrane passes span 1–21 (MNQI…IIII), 39–59 (ISLL…YLFN), 78–98 (IDGI…ISLI), 116–136 (VLLI…LDLI), 137–157 (TFYI…GKLG), 186–206 (YIFI…GIYI), 220–240 (IILS…GILV), 264–284 (IILA…LILI), 289–309 (VIII…FYIG), 318–338 (IKVI…MSIF), 349–369 (LLIS…VGGI), 388–408 (YMPI…GIPL), 422–442 (IFIY…ITTI), and 476–496 (LLLN…NLII).

Belongs to the complex I subunit 4 family.

It is found in the mitochondrion membrane. It catalyses the reaction a ubiquinone + NADH + 5 H(+)(in) = a ubiquinol + NAD(+) + 4 H(+)(out). Its function is as follows. Core subunit of the mitochondrial membrane respiratory chain NADH dehydrogenase (Complex I) that is believed to belong to the minimal assembly required for catalysis. Complex I functions in the transfer of electrons from NADH to the respiratory chain. The immediate electron acceptor for the enzyme is believed to be ubiquinone. This is NADH-ubiquinone oxidoreductase chain 4 (ND4) from Wickerhamomyces canadensis (Yeast).